The following is a 153-amino-acid chain: Deoxyuridine 5'-triphosphate nucleotidohydrolase (153 aa).

Substrate contacts are provided by residues 71–73 (RSG), asparagine 84, 88–90 (TID), and lysine 98.

The protein belongs to the dUTPase family. The cofactor is Mg(2+).

It catalyses the reaction dUTP + H2O = dUMP + diphosphate + H(+). Its pathway is pyrimidine metabolism; dUMP biosynthesis; dUMP from dCTP (dUTP route): step 2/2. Functionally, this enzyme is involved in nucleotide metabolism: it produces dUMP, the immediate precursor of thymidine nucleotides and it decreases the intracellular concentration of dUTP so that uracil cannot be incorporated into DNA. The protein is Deoxyuridine 5'-triphosphate nucleotidohydrolase of Wolbachia sp. subsp. Drosophila simulans (strain wRi).